Here is a 174-residue protein sequence, read N- to C-terminus: ATP-dependent protease subunit HslV (174 aa).

The active site involves threonine 2. Glycine 157, cysteine 160, and threonine 163 together coordinate Na(+).

The protein belongs to the peptidase T1B family. HslV subfamily. As to quaternary structure, a double ring-shaped homohexamer of HslV is capped on each side by a ring-shaped HslU homohexamer. The assembly of the HslU/HslV complex is dependent on binding of ATP.

It localises to the cytoplasm. It carries out the reaction ATP-dependent cleavage of peptide bonds with broad specificity.. With respect to regulation, allosterically activated by HslU binding. In terms of biological role, protease subunit of a proteasome-like degradation complex believed to be a general protein degrading machinery. This is ATP-dependent protease subunit HslV from Shewanella oneidensis (strain ATCC 700550 / JCM 31522 / CIP 106686 / LMG 19005 / NCIMB 14063 / MR-1).